The chain runs to 134 residues: Small ribosomal subunit protein uS8c (134 aa).

Belongs to the universal ribosomal protein uS8 family. In terms of assembly, part of the 30S ribosomal subunit.

The protein resides in the plastid. One of the primary rRNA binding proteins, it binds directly to 16S rRNA central domain where it helps coordinate assembly of the platform of the 30S subunit. This chain is Small ribosomal subunit protein uS8c (rps8), found in Cuscuta reflexa (Southern Asian dodder).